A 191-amino-acid chain; its full sequence is Succinoglycan biosynthesis protein ExoI (191 aa).

The disordered stretch occupies residues 1 to 21 (MTRIKSAVAAGGRRAPHSARL).

It participates in glycan metabolism; exopolysaccharide biosynthesis. This chain is Succinoglycan biosynthesis protein ExoI (exoI), found in Rhizobium meliloti (strain 1021) (Ensifer meliloti).